An 80-amino-acid chain; its full sequence is Acyl carrier protein (80 aa).

In terms of domain architecture, Carrier spans 1–76 (MTLEEKIIEI…DVIDYLKVRN (76 aa)). An O-(pantetheine 4'-phosphoryl)serine modification is found at Ser36.

It belongs to the acyl carrier protein (ACP) family. 4'-phosphopantetheine is transferred from CoA to a specific serine of apo-ACP by AcpS. This modification is essential for activity because fatty acids are bound in thioester linkage to the sulfhydryl of the prosthetic group.

The protein localises to the cytoplasm. Its pathway is lipid metabolism; fatty acid biosynthesis. Its function is as follows. Carrier of the growing fatty acid chain in fatty acid biosynthesis. The protein is Acyl carrier protein of Syntrophus aciditrophicus (strain SB).